Consider the following 249-residue polypeptide: UDP-2,3-diacylglucosamine hydrolase (249 aa).

Positions 7, 9, 40, 78, and 113 each coordinate Mn(2+). 78–79 (NR) is a binding site for substrate. The substrate site is built by Asp121, Ser159, Thr163, Lys166, and His194. Mn(2+) is bound by residues His194 and His196.

This sequence belongs to the LpxH family. Requires Mn(2+) as cofactor.

The protein localises to the cell inner membrane. It carries out the reaction UDP-2-N,3-O-bis[(3R)-3-hydroxytetradecanoyl]-alpha-D-glucosamine + H2O = 2-N,3-O-bis[(3R)-3-hydroxytetradecanoyl]-alpha-D-glucosaminyl 1-phosphate + UMP + 2 H(+). It participates in glycolipid biosynthesis; lipid IV(A) biosynthesis; lipid IV(A) from (3R)-3-hydroxytetradecanoyl-[acyl-carrier-protein] and UDP-N-acetyl-alpha-D-glucosamine: step 4/6. In terms of biological role, hydrolyzes the pyrophosphate bond of UDP-2,3-diacylglucosamine to yield 2,3-diacylglucosamine 1-phosphate (lipid X) and UMP by catalyzing the attack of water at the alpha-P atom. Involved in the biosynthesis of lipid A, a phosphorylated glycolipid that anchors the lipopolysaccharide to the outer membrane of the cell. This chain is UDP-2,3-diacylglucosamine hydrolase, found in Pseudomonas fluorescens (strain SBW25).